The sequence spans 121 residues: Prefoldin subunit beta (121 aa).

It belongs to the prefoldin subunit beta family. Heterohexamer of two alpha and four beta subunits.

The protein localises to the cytoplasm. Molecular chaperone capable of stabilizing a range of proteins. Seems to fulfill an ATP-independent, HSP70-like function in archaeal de novo protein folding. The protein is Prefoldin subunit beta of Caldivirga maquilingensis (strain ATCC 700844 / DSM 13496 / JCM 10307 / IC-167).